The following is a 1129-amino-acid chain: Serine/threonine-protein kinase 11-interacting protein (1129 aa).

LRR repeat units lie at residues 107-128 (SLRS…RSVY), 130-150 (QLEV…IALC), 162-183 (VLHT…LELL), 185-206 (SLKI…LKVL), 208-229 (ELQY…SVGN), 232-253 (KLHS…ENLP), 254-275 (NLQH…SGLA), and 279-300 (NLKQ…RALT). Disordered regions lie at residues 335–392 (RLQP…RRGQ), 428–475 (DPEY…HVAP), 654–678 (GDIY…NHTG), and 696–724 (NPTG…GLAA). Residues 337–355 (QPSSSATESSCTGDLTDSY) are compositionally biased toward polar residues. Basic residues predominate over residues 365–374 (LPRKKSRVKV). A compositionally biased stretch (basic and acidic residues) spans 381–391 (ERSDSEYERRG). Positions 436–447 (HSPPPRASPSPT) are enriched in pro residues. Residues 448 to 458 (APSSVPKQKSP) show a composition bias toward low complexity.

The protein belongs to the STK11IP family.

It is found in the cytoplasm. The protein is Serine/threonine-protein kinase 11-interacting protein (stk11ip) of Xenopus tropicalis (Western clawed frog).